The sequence spans 62 residues: Conotoxin reg3.5 (62 aa).

A signal peptide spans 1-22; it reads MMFKLGVLLTICLLLFPLTGTA. A propeptide spanning residues 23–49 is cleaved from the precursor; the sequence is LDGDQLAEHMLDISSGINDRWFDPVRK. Disulfide bonds link Cys50–Cys60, Cys51–Cys58, and Cys56–Cys61.

This sequence belongs to the conotoxin M superfamily. In terms of tissue distribution, expressed by the venom duct.

The protein localises to the secreted. The protein is Conotoxin reg3.5 of Conus regius (Crown cone).